Consider the following 381-residue polypeptide: DNA replication and repair protein RecF (381 aa).

ATP is bound at residue 30–37; it reads GENAQGKT.

The protein belongs to the RecF family.

The protein localises to the cytoplasm. In terms of biological role, the RecF protein is involved in DNA metabolism; it is required for DNA replication and normal SOS inducibility. RecF binds preferentially to single-stranded, linear DNA. It also seems to bind ATP. The chain is DNA replication and repair protein RecF from Lactobacillus delbrueckii subsp. bulgaricus (strain ATCC BAA-365 / Lb-18).